A 314-amino-acid polypeptide reads, in one-letter code: Malate dehydrogenase (314 aa).

Residues Gly-11–Gly-16 and Asp-35 contribute to the NAD(+) site. Substrate-binding residues include Arg-84 and Arg-90. NAD(+) is bound by residues Asn-97 and Ile-120–Asn-122. Substrate contacts are provided by Asn-122 and Arg-153. The active-site Proton acceptor is His-177.

It belongs to the LDH/MDH superfamily. MDH type 3 family.

It carries out the reaction (S)-malate + NAD(+) = oxaloacetate + NADH + H(+). Catalyzes the reversible oxidation of malate to oxaloacetate. This chain is Malate dehydrogenase, found in Rickettsia rickettsii (strain Iowa).